A 219-amino-acid chain; its full sequence is tRNA (guanine-N(7)-)-methyltransferase (219 aa).

Residues glutamate 43, aspartate 68, glutamate 101, and asparagine 124 each contribute to the S-adenosyl-L-methionine site. Lysine 128 and aspartate 160 together coordinate substrate.

Belongs to the class I-like SAM-binding methyltransferase superfamily. TrmB family.

It carries out the reaction guanosine(46) in tRNA + S-adenosyl-L-methionine = N(7)-methylguanosine(46) in tRNA + S-adenosyl-L-homocysteine. The protein operates within tRNA modification; N(7)-methylguanine-tRNA biosynthesis. In terms of biological role, catalyzes the formation of N(7)-methylguanine at position 46 (m7G46) in tRNA. This Clostridium beijerinckii (strain ATCC 51743 / NCIMB 8052) (Clostridium acetobutylicum) protein is tRNA (guanine-N(7)-)-methyltransferase.